The chain runs to 222 residues: Probable transaldolase (222 aa).

Catalysis depends on lysine 91, which acts as the Schiff-base intermediate with substrate.

Belongs to the transaldolase family. Type 3B subfamily.

The protein resides in the cytoplasm. It catalyses the reaction D-sedoheptulose 7-phosphate + D-glyceraldehyde 3-phosphate = D-erythrose 4-phosphate + beta-D-fructose 6-phosphate. It participates in carbohydrate degradation; pentose phosphate pathway; D-glyceraldehyde 3-phosphate and beta-D-fructose 6-phosphate from D-ribose 5-phosphate and D-xylulose 5-phosphate (non-oxidative stage): step 2/3. Its function is as follows. Transaldolase is important for the balance of metabolites in the pentose-phosphate pathway. This Pelodictyon phaeoclathratiforme (strain DSM 5477 / BU-1) protein is Probable transaldolase.